A 95-amino-acid polypeptide reads, in one-letter code: Aspartyl/glutamyl-tRNA(Asn/Gln) amidotransferase subunit C (95 aa).

It belongs to the GatC family. Heterotrimer of A, B and C subunits.

It carries out the reaction L-glutamyl-tRNA(Gln) + L-glutamine + ATP + H2O = L-glutaminyl-tRNA(Gln) + L-glutamate + ADP + phosphate + H(+). The enzyme catalyses L-aspartyl-tRNA(Asn) + L-glutamine + ATP + H2O = L-asparaginyl-tRNA(Asn) + L-glutamate + ADP + phosphate + 2 H(+). Its function is as follows. Allows the formation of correctly charged Asn-tRNA(Asn) or Gln-tRNA(Gln) through the transamidation of misacylated Asp-tRNA(Asn) or Glu-tRNA(Gln) in organisms which lack either or both of asparaginyl-tRNA or glutaminyl-tRNA synthetases. The reaction takes place in the presence of glutamine and ATP through an activated phospho-Asp-tRNA(Asn) or phospho-Glu-tRNA(Gln). The protein is Aspartyl/glutamyl-tRNA(Asn/Gln) amidotransferase subunit C of Geotalea daltonii (strain DSM 22248 / JCM 15807 / FRC-32) (Geobacter daltonii).